A 1372-amino-acid chain; its full sequence is DNA-directed RNA polymerase subunit beta' (1372 aa).

Residues cysteine 69, cysteine 71, cysteine 84, and cysteine 87 each contribute to the Zn(2+) site. The Mg(2+) site is built by aspartate 460, aspartate 462, and aspartate 464. Cysteine 808, cysteine 882, cysteine 889, and cysteine 892 together coordinate Zn(2+).

The protein belongs to the RNA polymerase beta' chain family. In terms of assembly, the RNAP catalytic core consists of 2 alpha, 1 beta, 1 beta' and 1 omega subunit. When a sigma factor is associated with the core the holoenzyme is formed, which can initiate transcription. The cofactor is Mg(2+). Zn(2+) serves as cofactor.

It carries out the reaction RNA(n) + a ribonucleoside 5'-triphosphate = RNA(n+1) + diphosphate. In terms of biological role, DNA-dependent RNA polymerase catalyzes the transcription of DNA into RNA using the four ribonucleoside triphosphates as substrates. In Rickettsia conorii (strain ATCC VR-613 / Malish 7), this protein is DNA-directed RNA polymerase subunit beta'.